Reading from the N-terminus, the 447-residue chain is Cellulosome-anchoring protein (447 aa).

Residues 1 to 29 (MKRIKRILAVLTIFALLATINAFTFVSLA) form the signal peptide. In terms of domain architecture, Cohesin spans 30–180 (QTNTIEIIIG…EIIEASAPEA (151 aa)). The segment at 30–180 (QTNTIEIIIG…EIIEASAPEA (151 aa)) is receptor binding site for duplicated segment of CipA. The segment at 177 to 247 (APEATPTPGS…EHAPFLKGYP (71 aa)) is disordered. Gly residues predominate over residues 188-200 (AGSGAGGGTGSSG). Over residues 201–223 (SGQPSATPTPTATEKPSTTPKTT) the composition is skewed to low complexity. 3 SLH domains span residues 216–280 (PSTT…AGKN), 281–344 (SSIT…EQGT), and 345–408 (DVKT…GAVL). Residues 409-429 (EFTDVPVNYWAYKDIAEGVIY) enclose the SLH 4; truncated domain.

It localises to the secreted. Its subcellular location is the cell wall. The protein resides in the S-layer. In terms of biological role, anchors the cellulosome to the cell surface by binding the duplicated segment that is present at the C-terminal end of CipA. The polypeptide is Cellulosome-anchoring protein (ancA) (Acetivibrio thermocellus (strain ATCC 27405 / DSM 1237 / JCM 9322 / NBRC 103400 / NCIMB 10682 / NRRL B-4536 / VPI 7372) (Clostridium thermocellum)).